The primary structure comprises 67 residues: Conotoxin VnMMSK-03 (67 aa).

Residues 1 to 20 (MMSKLGVVLTICLLPFPLTA) form the signal peptide. Residues 21 to 50 (LPMDGDQPADLPALRTQDFEPERSPWFDPV) constitute a propeptide that is removed on maturation. Cystine bridges form between Cys53–Cys65, Cys54–Cys61, and Cys58–Cys64. Pro63 is subject to 4-hydroxyproline.

The protein belongs to the conotoxin M superfamily. Expressed by the venom duct.

The protein resides in the secreted. This chain is Conotoxin VnMMSK-03, found in Conus ventricosus (Mediterranean cone).